We begin with the raw amino-acid sequence, 761 residues long: 1,4-alpha-glucan branching enzyme GlgB (761 aa).

D431 serves as the catalytic Nucleophile. The active-site Proton donor is E484.

This sequence belongs to the glycosyl hydrolase 13 family. GlgB subfamily. As to quaternary structure, monomer.

It carries out the reaction Transfers a segment of a (1-&gt;4)-alpha-D-glucan chain to a primary hydroxy group in a similar glucan chain.. It functions in the pathway glycan biosynthesis; glycogen biosynthesis. Catalyzes the formation of the alpha-1,6-glucosidic linkages in glycogen by scission of a 1,4-alpha-linked oligosaccharide from growing alpha-1,4-glucan chains and the subsequent attachment of the oligosaccharide to the alpha-1,6 position. This chain is 1,4-alpha-glucan branching enzyme GlgB, found in Synechococcus sp. (strain WH7803).